Here is a 465-residue protein sequence, read N- to C-terminus: Protein hedgehog (465 aa).

The N-palmitoyl cysteine moiety is linked to residue C79. The Ca(2+) site is built by E143, E144, D149, T179, E180, D183, and D185. G251 is lipidated: Cholesterol glycine ester.

The protein belongs to the hedgehog family. As to quaternary structure, interacts with shf. In terms of processing, the C-terminal part of the hedgehog protein precursor displays an autoproteolysis activity that results in the cleavage of the full-length protein into two parts (N-product and C-product). In addition, the C-terminal part displays a cholesterol transferase activity that results by the covalent attachment of a cholesterol moiety to the C-terminal of the newly generated N-product. The N-product is the active species in both local and long-range signaling, whereas the C-product has no signaling activity. Cholesterylation is required for N-product targeting to lipid rafts and multimerization. Post-translationally, N-palmitoylation by Rasp of the hedgehog N-product, within the secretory pathway, is required for the embryonic and larval patterning activities of the hedgehog signal.

It is found in the nucleus. Its subcellular location is the cytoplasm. It localises to the cell membrane. The enzyme catalyses glycyl-L-cysteinyl-[protein] + cholesterol + H(+) = [protein]-C-terminal glycyl cholesterol ester + N-terminal L-cysteinyl-[protein]. Its function is as follows. The C-terminal part of the hedgehog protein precursor displays an autoproteolysis activity that results in the cleavage of the full-length protein into two parts (N-product and C-product). In addition, the C-terminal part displays a cholesterol transferase activity that results by the covalent attachment of a cholesterol moiety to the C-terminal of the newly generated N-product. Once cleaved, the C-product has no signaling activity and diffuses from the cell. The dually lipidated hedgehog protein N-product is a morphogen which is essential for a variety of patterning events during development. Establishes the anterior-posterior axis of the embryonic segments and patterns the larval imaginal disks. Binds to the patched (ptc) receptor, which functions in association with smoothened (smo), to activate the transcription of target genes wingless (wg), decapentaplegic (dpp) and ptc. In the absence of hh, ptc represses the constitutive signaling activity of smo through fused (fu). Essential component of a signaling pathway which regulates the Duox-dependent gut immune response to bacterial uracil; required to activate Cad99C-dependent endosome formation, norpA-dependent Ca2+ mobilization and p38 MAPK, which are essential steps in the Duox-dependent production of reactive oxygen species (ROS) in response to intestinal bacterial infection. During photoreceptor differentiation, it up-regulates transcription of Ubr3, which in turn promotes the hh-signaling pathway by mediating the ubiquitination and degradation of cos. The protein is Protein hedgehog of Drosophila sechellia (Fruit fly).